Reading from the N-terminus, the 362-residue chain is Chorismate synthase (362 aa).

NADP(+) contacts are provided by arginine 47 and arginine 53. FMN is bound by residues 124–126 (RSS), glycine 285, 300–304 (KPTAT), and arginine 326.

The protein belongs to the chorismate synthase family. Homotetramer. FMNH2 serves as cofactor.

The enzyme catalyses 5-O-(1-carboxyvinyl)-3-phosphoshikimate = chorismate + phosphate. It functions in the pathway metabolic intermediate biosynthesis; chorismate biosynthesis; chorismate from D-erythrose 4-phosphate and phosphoenolpyruvate: step 7/7. Functionally, catalyzes the anti-1,4-elimination of the C-3 phosphate and the C-6 proR hydrogen from 5-enolpyruvylshikimate-3-phosphate (EPSP) to yield chorismate, which is the branch point compound that serves as the starting substrate for the three terminal pathways of aromatic amino acid biosynthesis. This reaction introduces a second double bond into the aromatic ring system. In Cyanothece sp. (strain PCC 7425 / ATCC 29141), this protein is Chorismate synthase.